A 536-amino-acid polypeptide reads, in one-letter code: Membrane protein insertase YidC (536 aa).

Residues 14-34 (ILIATAISLLFFIPYSYFFAP) form a helical membrane-spanning segment. The segment at 43-69 (STSMERAEQQAAPQTSSSPKEGQVSSV) is disordered. Polar residues predominate over residues 53 to 68 (AAPQTSSSPKEGQVSS). A run of 5 helical transmembrane segments spans residues 312 to 332 (VVEY…LDWL), 339 to 359 (WGWA…PLTY), 401 to 421 (GANP…FFAI), 436 to 456 (WILW…PILM), and 484 to 504 (PLIF…YWFV).

The protein belongs to the OXA1/ALB3/YidC family. Type 1 subfamily. In terms of assembly, interacts with the Sec translocase complex via SecD. Specifically interacts with transmembrane segments of nascent integral membrane proteins during membrane integration.

It localises to the cell inner membrane. Functionally, required for the insertion and/or proper folding and/or complex formation of integral membrane proteins into the membrane. Involved in integration of membrane proteins that insert both dependently and independently of the Sec translocase complex, as well as at least some lipoproteins. Aids folding of multispanning membrane proteins. This is Membrane protein insertase YidC from Wolinella succinogenes (strain ATCC 29543 / DSM 1740 / CCUG 13145 / JCM 31913 / LMG 7466 / NCTC 11488 / FDC 602W) (Vibrio succinogenes).